The following is a 70-amino-acid chain: Peptide BmKn1 (70 aa).

The signal sequence occupies residues 1–23 (MKSQTFFLLFLVVLLLAISQSEA). F36 is modified (phenylalanine amide). Positions 40-70 (SMRDMDTMKYLYDPSLSAADLKTLQKLMENY) are excised as a propeptide.

Belongs to the non-disulfide-bridged peptide (NDBP) superfamily. Short antimicrobial peptide (group 4) family. Expressed by the venom gland.

The protein resides in the secreted. It is found in the target cell membrane. Functionally, antibacterial peptide. This is Peptide BmKn1 from Olivierus martensii (Manchurian scorpion).